The following is a 106-amino-acid chain: MPKVHVRKGDTVMVITGKDAGKKGKVVTVEPAKNRVIVEGVNIVKRHRKATPQMPQGGIVEKEAPIHSSNVMLFCNKCNKATRIQKKVLDNGNKERICKHCGETLS.

It belongs to the universal ribosomal protein uL24 family. In terms of assembly, part of the 50S ribosomal subunit.

Its function is as follows. One of two assembly initiator proteins, it binds directly to the 5'-end of the 23S rRNA, where it nucleates assembly of the 50S subunit. One of the proteins that surrounds the polypeptide exit tunnel on the outside of the subunit. The polypeptide is Large ribosomal subunit protein uL24 (Desulforamulus reducens (strain ATCC BAA-1160 / DSM 100696 / MI-1) (Desulfotomaculum reducens)).